A 464-amino-acid polypeptide reads, in one-letter code: Protein FAM90A11 (464 aa).

Disordered stretches follow at residues 1-42 (MMAR…DPRL), 70-389 (PATL…HDGA), and 415-437 (HSPE…SEAP). Composition is skewed to basic and acidic residues over residues 74–89 (GKKE…KPRV) and 97–114 (NKDK…DPQR). Over residues 180–197 (LASLSPLRKASLSSSSSL) the composition is skewed to low complexity. Residues 341 to 356 (GPSTSPQMGRRTSAQV) are compositionally biased toward polar residues.

Belongs to the FAM90 family.

The polypeptide is Protein FAM90A11 (Homo sapiens (Human)).